We begin with the raw amino-acid sequence, 349 residues long: MKHVFSGFQTFLKQVHSPIYLALAVVIFSAANPVTSRIIELGKTYEINGRNPISFCNVLFVGNLCALGLMILIFHPDWQLHKLRKLTRKDWFLLTVTAILSRAIAPGLMFSALEKTNVTNVVLIGRLEPVFTLILSILLLKISVNWLSMVATLISFVGVAVTVFWGVADPLDMVINFDFGLGESFVAIAAFISAITTILSKQQLQSIPVGIFTVYRSLLGTFVFFWIAVIIYGFDHFMDVSSPILWRWMLIYGAIIVVVGQVAWLAGLKNASFIQINLASLVTPILAIIFAYLILLETPTNAQYLGGILLLLGAILSFIDNLKTAKDKQASKPLNSREAMDTNVGFRGV.

The next 10 membrane-spanning stretches (helical) occupy residues 15–35, 53–73, 91–111, 120–140, 147–167, 179–199, 218–238, 248–268, 276–296, and 302–322; these read VHSPIYLALAVVIFSAANPVT, ISFCNVLFVGNLCALGLMILI, WFLLTVTAILSRAIAPGLMFS, NVVLIGRLEPVFTLILSILLL, LSMVATLISFVGVAVTVFWGV, FGLGESFVAIAAFISAITTIL, LLGTFVFFWIAVIIYGFDHFM, WMLIYGAIIVVVGQVAWLAGL, INLASLVTPILAIIFAYLILL, and AQYLGGILLLLGAILSFIDNL. EamA domains are found at residues 39-164 and 191-319; these read IELG…VTVF and FISA…LSFI.

The protein belongs to the EamA transporter family.

It localises to the cell membrane. This is an uncharacterized protein from Synechocystis sp. (strain ATCC 27184 / PCC 6803 / Kazusa).